The chain runs to 443 residues: MQPLRSLCGRALVALIFACGVAGVQSEERGFPPAGATPPALRTGEIVAPPTKTFWPRGSNASLPRSSSPPQMPKGGRMAGPPARTLTPPPCEGPIEIKDTFKYINTVVSCLVFVLGIIGNSTLLRIIYKNKCMRNGPNILIASLALGDLLHIIIDIPINVYKLLAEDWPFGVEMCKLVPFIQKASVGITVLSLCALSIDRYRAVASWSRIKGIGVPKWTAVEIVLIWVVSVVLAVPEALGFDMITTDYKGNRLRICLLHPTQKTAFMQFYKTAKDWWLFSFYFCLPLAITAFFYTLMTCEMLRKKSGMQIALNDHLKQRREVAKTVFCLVLVFALCWLPLHLSRILKLTLYDQNDSNRCELLSFLLVLDYIGINMASLNSCINPIALYLVSKRFKNCFKSCLCCWCQSFEEKQSLEEKQSCLKFKANDHGYDNFRSSNKYSSS.

Positions 1–26 (MQPLRSLCGRALVALIFACGVAGVQS) are cleaved as a signal peptide. The Extracellular segment spans residues 27-102 (EERGFPPAGA…GPIEIKDTFK (76 aa)). Residues 53–89 (TFWPRGSNASLPRSSSPPQMPKGGRMAGPPARTLTPP) are disordered. Over residues 59 to 69 (SNASLPRSSSP) the composition is skewed to polar residues. N-linked (GlcNAc...) asparagine glycosylation is present at Asn-60. The helical transmembrane segment at 103 to 127 (YINTVVSCLVFVLGIIGNSTLLRII) threads the bilayer. Residues 128 to 138 (YKNKCMRNGPN) are Cytoplasmic-facing. The chain crosses the membrane as a helical span at residues 139–164 (ILIASLALGDLLHIIIDIPINVYKLL). Residues 165 to 176 (AEDWPFGVEMCK) lie on the Extracellular side of the membrane. Cys-175 and Cys-256 are oxidised to a cystine. Residues 177–198 (LVPFIQKASVGITVLSLCALSI) traverse the membrane as a helical segment. Residues 199–219 (DRYRAVASWSRIKGIGVPKWT) lie on the Cytoplasmic side of the membrane. A helical membrane pass occupies residues 220–244 (AVEIVLIWVVSVVLAVPEALGFDMI). The Extracellular segment spans residues 245 to 272 (TTDYKGNRLRICLLHPTQKTAFMQFYKT). A helical transmembrane segment spans residues 273-297 (AKDWWLFSFYFCLPLAITAFFYTLM). Over 298 to 325 (TCEMLRKKSGMQIALNDHLKQRREVAKT) the chain is Cytoplasmic. At Ser-306 the chain carries Phosphoserine. A helical membrane pass occupies residues 326–351 (VFCLVLVFALCWLPLHLSRILKLTLY). Over 352–363 (DQNDSNRCELLS) the chain is Extracellular. N-linked (GlcNAc...) asparagine glycosylation is present at Asn-354. A helical membrane pass occupies residues 364–390 (FLLVLDYIGINMASLNSCINPIALYLV). The Cytoplasmic segment spans residues 391–443 (SKRFKNCFKSCLCCWCQSFEEKQSLEEKQSCLKFKANDHGYDNFRSSNKYSSS). Residues Cys-403, Cys-404, and Cys-406 are each lipidated (S-palmitoyl cysteine). Residue Ser-420 is modified to Phosphoserine. At Tyr-440 the chain carries Phosphotyrosine. Phosphoserine occurs at positions 441, 442, and 443.

This sequence belongs to the G-protein coupled receptor 1 family. Endothelin receptor subfamily. EDNRB sub-subfamily.

It localises to the cell membrane. Functionally, non-specific receptor for endothelin 1, 2, and 3. Mediates its action by association with G proteins that activate a phosphatidylinositol-calcium second messenger system. The protein is Endothelin receptor type B (EDNRB) of Sus scrofa (Pig).